Consider the following 423-residue polypeptide: Carboxypeptidase B2 (423 aa).

An N-terminal signal peptide occupies residues 1–22 (MKLCSLAVLVPIVLFCEQHVFA). Residues 23-114 (FQSGQVLAAL…QISNDTVSPR (92 aa)) constitute a propeptide, activation peptide. N-linked (GlcNAc...) asparagine glycosylation is found at Asn-44, Asn-73, and Asn-85. Asn-108 carries N-linked (GlcNAc...) (complex) asparagine glycosylation. Residues 122 to 419 (QYHSLNEIYS…AAVSKIAWHV (298 aa)) form the Peptidase M14 domain. Cys-178 and Cys-191 are joined by a disulfide. Positions 181 and 184 each coordinate Zn(2+). Substrate contacts are provided by residues 181–184 (HARE) and Arg-239. Asn-241 carries an N-linked (GlcNAc...) asparagine; partial glycan. 2 cysteine pairs are disulfide-bonded: Cys-250-Cys-274 and Cys-265-Cys-279. Residue 256–257 (NR) coordinates substrate. His-310 contributes to the Zn(2+) binding site. Substrate is bound by residues 311 to 312 (SY) and Tyr-363. The active-site Proton donor/acceptor is Glu-385.

Belongs to the peptidase M14 family. Zn(2+) is required as a cofactor. In terms of processing, N-glycosylated. N-glycan at Asn-108: Hex5HexNAc4. Plasma; synthesized in the liver.

It is found in the secreted. It catalyses the reaction Release of C-terminal Arg and Lys from a polypeptide.. Its activity is regulated as follows. TAFI/CPB2 is unique among carboxypeptidases in that it spontaneously inactivates with a short half-life, a property that is crucial for its role in controlling blood clot lysis. The zymogen is stabilized by interactions with the activation peptide. Release of the activation peptide increases a dynamic flap mobility and in time this leads to conformational changes that disrupt the catalytic site and expose a cryptic thrombin-cleavage site present at Arg-324. Cleaves C-terminal arginine or lysine residues from biologically active peptides such as kinins or anaphylatoxins in the circulation thereby regulating their activities. Down-regulates fibrinolysis by removing C-terminal lysine residues from fibrin that has already been partially degraded by plasmin. The sequence is that of Carboxypeptidase B2 (CPB2) from Homo sapiens (Human).